A 186-amino-acid chain; its full sequence is Peptidyl-tRNA hydrolase (186 aa).

Tyr14 provides a ligand contact to tRNA. Catalysis depends on His19, which acts as the Proton acceptor. TRNA-binding residues include Phe65, Asn67, and Asn113.

The protein belongs to the PTH family. As to quaternary structure, monomer.

It localises to the cytoplasm. The catalysed reaction is an N-acyl-L-alpha-aminoacyl-tRNA + H2O = an N-acyl-L-amino acid + a tRNA + H(+). Functionally, hydrolyzes ribosome-free peptidyl-tRNAs (with 1 or more amino acids incorporated), which drop off the ribosome during protein synthesis, or as a result of ribosome stalling. Its function is as follows. Catalyzes the release of premature peptidyl moieties from peptidyl-tRNA molecules trapped in stalled 50S ribosomal subunits, and thus maintains levels of free tRNAs and 50S ribosomes. The polypeptide is Peptidyl-tRNA hydrolase (Limosilactobacillus fermentum (strain NBRC 3956 / LMG 18251) (Lactobacillus fermentum)).